We begin with the raw amino-acid sequence, 276 residues long: MATTGDDTLTVTASDYIQHHLTNAKMCSADGGIAFNYACQDAGFWTWHIDSLLFSVGLGVLFLWLFYKVGQKATIGVPGKLQCFVEMCVEGVDKIVKDSFHGKNAVIAPLGLTIFVWVFLMNLMDLIPVDFVPEAAKRFLGVPYLKIVPTTDLNVTLGLALSVFALIVFYSIKVKGIGGFTKELTMQPFNHWALIPINFVLETVTLVAKPISLSLRLFGNLYAGELIFILIALMPWWAQFALSVPWAIFHILVIVLQAFIFMMLTIVYLSMAHEDH.

Helical transmembrane passes span 47–67 (WHID…WLFY), 107–127 (IAPL…MDLI), 152–172 (DLNV…FYSI), 188–208 (PFNH…TLVA), 226–246 (LIFI…SVPW), and 247–267 (AIFH…LTIV).

Belongs to the ATPase A chain family. As to quaternary structure, F-type ATPases have 2 components, CF(1) - the catalytic core - and CF(0) - the membrane proton channel. CF(1) has five subunits: alpha(3), beta(3), gamma(1), delta(1), epsilon(1). CF(0) has three main subunits: a(1), b(2) and c(9-12). The alpha and beta chains form an alternating ring which encloses part of the gamma chain. CF(1) is attached to CF(0) by a central stalk formed by the gamma and epsilon chains, while a peripheral stalk is formed by the delta and b chains.

Its subcellular location is the cell inner membrane. Key component of the proton channel; it plays a direct role in the translocation of protons across the membrane. The chain is ATP synthase subunit a from Shewanella pealeana (strain ATCC 700345 / ANG-SQ1).